The following is a 251-amino-acid chain: Prolactin-7C1 (251 aa).

An N-terminal signal peptide occupies residues 1-30 (MLLSLTHPSFLAMLPMLLMSNLLQWEGVTS). N-linked (GlcNAc...) asparagine glycosylation is present at Asn57. Intrachain disulfides connect Cys101–Cys217 and Cys234–Cys242.

This sequence belongs to the somatotropin/prolactin family. In terms of tissue distribution, expressed exclusively in the placenta. Expressed in spongiotrophoblast cells and trophoblast giant cells of the junctional zone and in labyrinthine trophoblast.

The protein localises to the secreted. This is Prolactin-7C1 (Prl7c1) from Mus musculus (Mouse).